Reading from the N-terminus, the 145-residue chain is 3-hydroxyacyl-[acyl-carrier-protein] dehydratase FabZ (145 aa).

H49 is an active-site residue.

It belongs to the thioester dehydratase family. FabZ subfamily.

It localises to the cytoplasm. The catalysed reaction is a (3R)-hydroxyacyl-[ACP] = a (2E)-enoyl-[ACP] + H2O. Functionally, involved in unsaturated fatty acids biosynthesis. Catalyzes the dehydration of short chain beta-hydroxyacyl-ACPs and long chain saturated and unsaturated beta-hydroxyacyl-ACPs. The chain is 3-hydroxyacyl-[acyl-carrier-protein] dehydratase FabZ from Rickettsia typhi (strain ATCC VR-144 / Wilmington).